Here is a 288-residue protein sequence, read N- to C-terminus: ATP synthase gamma chain (288 aa).

The protein belongs to the ATPase gamma chain family. In terms of assembly, F-type ATPases have 2 components, CF(1) - the catalytic core - and CF(0) - the membrane proton channel. CF(1) has five subunits: alpha(3), beta(3), gamma(1), delta(1), epsilon(1). CF(0) has three main subunits: a, b and c.

It is found in the cell membrane. In terms of biological role, produces ATP from ADP in the presence of a proton gradient across the membrane. The gamma chain is believed to be important in regulating ATPase activity and the flow of protons through the CF(0) complex. This Staphylococcus saprophyticus subsp. saprophyticus (strain ATCC 15305 / DSM 20229 / NCIMB 8711 / NCTC 7292 / S-41) protein is ATP synthase gamma chain.